We begin with the raw amino-acid sequence, 497 residues long: tRNA-2-methylthio-N(6)-dimethylallyladenosine synthase (497 aa).

The disordered stretch occupies residues 1-50 (MTGTSNIPTHGKEHKDAPALLPLPAPNPHHTHAAHPGDPSHDRPPSRGKL). The MTTase N-terminal domain occupies 48 to 165 (GKLFIKTHGC…LPDMIRARRE (118 aa)). Positions 57, 94, 128, 202, 206, and 209 each coordinate [4Fe-4S] cluster. The Radical SAM core domain maps to 188–430 (RAEGPSAFVS…QKHINAYAAD (243 aa)). Positions 433 to 496 (KRMIGTVQTV…TNSLRGRVHT (64 aa)) constitute a TRAM domain.

Belongs to the methylthiotransferase family. MiaB subfamily. As to quaternary structure, monomer. [4Fe-4S] cluster is required as a cofactor.

It is found in the cytoplasm. The catalysed reaction is N(6)-dimethylallyladenosine(37) in tRNA + (sulfur carrier)-SH + AH2 + 2 S-adenosyl-L-methionine = 2-methylsulfanyl-N(6)-dimethylallyladenosine(37) in tRNA + (sulfur carrier)-H + 5'-deoxyadenosine + L-methionine + A + S-adenosyl-L-homocysteine + 2 H(+). Catalyzes the methylthiolation of N6-(dimethylallyl)adenosine (i(6)A), leading to the formation of 2-methylthio-N6-(dimethylallyl)adenosine (ms(2)i(6)A) at position 37 in tRNAs that read codons beginning with uridine. The polypeptide is tRNA-2-methylthio-N(6)-dimethylallyladenosine synthase (Xylella fastidiosa (strain M12)).